The primary structure comprises 400 residues: Argininosuccinate synthase (400 aa).

8–16 (AYSGGLDTS) is a binding site for ATP. Tyr-87 is an L-citrulline binding site. Gly-117 contributes to the ATP binding site. Residues Thr-119, Asn-123, and Asp-124 each contribute to the L-aspartate site. Asn-123 lines the L-citrulline pocket. Residues Arg-127, Ser-175, Glu-260, and Tyr-272 each coordinate L-citrulline.

The protein belongs to the argininosuccinate synthase family. Type 1 subfamily. Homotetramer.

Its subcellular location is the cytoplasm. It carries out the reaction L-citrulline + L-aspartate + ATP = 2-(N(omega)-L-arginino)succinate + AMP + diphosphate + H(+). It participates in amino-acid biosynthesis; L-arginine biosynthesis; L-arginine from L-ornithine and carbamoyl phosphate: step 2/3. This is Argininosuccinate synthase from Mycolicibacterium vanbaalenii (strain DSM 7251 / JCM 13017 / BCRC 16820 / KCTC 9966 / NRRL B-24157 / PYR-1) (Mycobacterium vanbaalenii).